A 282-amino-acid polypeptide reads, in one-letter code: Probable porphobilinogen deaminase (282 aa).

At Cys233 the chain carries S-(dipyrrolylmethanemethyl)cysteine.

This sequence belongs to the HMBS family. It depends on dipyrromethane as a cofactor.

It catalyses the reaction 4 porphobilinogen + H2O = hydroxymethylbilane + 4 NH4(+). The protein operates within porphyrin-containing compound metabolism; protoporphyrin-IX biosynthesis; coproporphyrinogen-III from 5-aminolevulinate: step 2/4. In terms of biological role, tetrapolymerization of the monopyrrole PBG into the hydroxymethylbilane pre-uroporphyrinogen in several discrete steps. This Picrophilus torridus (strain ATCC 700027 / DSM 9790 / JCM 10055 / NBRC 100828 / KAW 2/3) protein is Probable porphobilinogen deaminase.